The following is a 261-amino-acid chain: Gap junction beta-6 protein (261 aa).

Residues 1–22 (MDWGTLHTFIGGVNKHSTSIGK) lie on the Cytoplasmic side of the membrane. Residues 23–45 (VWITVIFIFRVMILVVAAQEVWG) traverse the membrane as a helical segment. The Extracellular segment spans residues 46 to 75 (DEQEDFVCNTLQPGCKNVCYDHFFPVSHIR). Residues 76-98 (LWALQLIFVSTPALLVAMHVAYY) traverse the membrane as a helical segment. The Cytoplasmic segment spans residues 99-131 (RHETTRKFRRGEKRNDFKDIEDIKKQKVRIEGS). Residues 132-154 (LWWTYTSSIFFRIIFEAAFMYVF) traverse the membrane as a helical segment. Residues 155–192 (YFLYNGYHLPWVLKCGIDPCPNLVDCFISRPTEKTVFT) lie on the Extracellular side of the membrane. The helical transmembrane segment at 193–215 (IFMISASVICMLLNVAELCYLLL) threads the bilayer. Over 216–261 (KVCFRRSKRAQTQKNHPNHALKESKQNEMNELISDSGQNAITGFPS) the chain is Cytoplasmic.

This sequence belongs to the connexin family. Beta-type (group I) subfamily. In terms of assembly, a connexon is composed of a hexamer of connexins. Interacts with CNST.

The protein resides in the cell membrane. Its subcellular location is the cell junction. It is found in the gap junction. In terms of biological role, one gap junction consists of a cluster of closely packed pairs of transmembrane channels, the connexons, through which materials of low MW diffuse from one cell to a neighboring cell. This is Gap junction beta-6 protein (GJB6) from Homo sapiens (Human).